A 369-amino-acid polypeptide reads, in one-letter code: Ubiquinone biosynthesis protein COQ4, mitochondrial (369 aa).

A mitochondrion-targeting transit peptide spans 1 to 35; that stretch reads MLTSQKVSRVLLHSSFLKTPVSTQSRSFVFTTIAT. Residues H212, D213, H216, and E228 each coordinate Zn(2+). Residues 329–360 are compositionally biased toward low complexity; it reads AAAAATVTQRQRQQQRATATAANATSASSANV. The segment at 329–369 is disordered; sequence AAAAATVTQRQRQQQRATATAANATSASSANVKPSNTAGAM.

This sequence belongs to the COQ4 family. As to quaternary structure, component of a multi-subunit COQ enzyme complex, composed of at least COQ3, COQ4, COQ5, COQ6, COQ7 and COQ9. The cofactor is Zn(2+).

Its subcellular location is the mitochondrion inner membrane. The enzyme catalyses a 4-hydroxy-3-methoxy-5-(all-trans-polyprenyl)benzoate + H(+) = a 2-methoxy-6-(all-trans-polyprenyl)phenol + CO2. It participates in cofactor biosynthesis; ubiquinone biosynthesis. Functionally, lyase that catalyzes the C1-decarboxylation of 4-hydroxy-3-methoxy-5-(all-trans-polyprenyl)benzoic acid into 2-methoxy-6-(all-trans-polyprenyl)phenol during ubiquinone biosynthesis. The protein is Ubiquinone biosynthesis protein COQ4, mitochondrial of Lodderomyces elongisporus (strain ATCC 11503 / CBS 2605 / JCM 1781 / NBRC 1676 / NRRL YB-4239) (Yeast).